A 924-amino-acid chain; its full sequence is Phosphatidate phosphatase LPIN1 (924 aa).

Residues 1-108 (MNYVGQLAGQ…IPMYLATSPI (108 aa)) form an N-LIP region. Ser-106 and Ser-150 each carry phosphoserine. Disordered stretches follow at residues 133 to 248 (PTTA…DCQR) and 269 to 297 (FHASESPSGSRPSTPKSDSELVSKSADRL). Residues 152–161 (GKKRRKRRRK) show a composition bias toward basic residues. The short motif at 153-158 (KKRRKR) is the Nuclear localization signal element. A compositionally biased stretch (basic and acidic residues) spans 162–172 (AQLDNLKRDDN). A compositionally biased stretch (acidic residues) spans 176-193 (SEDEDMFPIEMSSDEDTA). Polar residues-rich tracts occupy residues 218-229 (PSISTHPQSASY) and 273-284 (ESPSGSRPSTPK). Residues Ser-285, Ser-287, and Ser-293 each carry the phosphoserine modification. Residues 285-297 (SDSELVSKSADRL) are compositionally biased toward basic and acidic residues. Position 298 is a phosphothreonine (Thr-298). Disordered regions lie at residues 314 to 426 (QAAK…SRHL) and 446 to 490 (LYFP…STSD). Residue Ser-328 is modified to Phosphoserine. Polar residues predominate over residues 343 to 358 (AIHSESSDTFSDQSPT). Position 392 is a phosphoserine (Ser-392). The span at 404 to 413 (NTAQSSSKTD) shows a compositional bias: polar residues. Lys-459 carries the N6-acetyllysine modification. Polar residues predominate over residues 461-476 (ASDNGARSANQSPQSV). Phosphoserine is present on residues Ser-468, Ser-472, and Ser-483. Glycyl lysine isopeptide (Lys-Gly) (interchain with G-Cter in SUMO) cross-links involve residues Lys-599 and Lys-629. The disordered stretch occupies residues 627–649 (RIKHESSSSDEEHAAAKPSGSSH). Residues 628-641 (IKHESSSSDEEHAA) are compositionally biased toward basic and acidic residues. Lys-629 is subject to N6-acetyllysine. A phosphoserine mark is found at Ser-634 and Ser-635. The C-LIP stretch occupies residues 658 to 864 (YKKTLRLTSE…VNPKGELVQE (207 aa)). Residues 712 to 716 (DIDGT) carry the DXDXT motif motif. An LXXIL motif motif is present at residues 723–727 (LGHIL). Residues Ser-921 and Ser-923 each carry the phosphoserine modification.

It belongs to the lipin family. Interacts (via LXXIL motif) with PPARA. Interacts with PPARGC1A. Interaction with PPARA and PPARGC1A leads to the formation of a complex that modulates gene transcription. Interacts with MEF2C. Mg(2+) is required as a cofactor. In terms of processing, phosphorylated at multiple sites in response to insulin. Phosphorylation is controlled by the mTOR signaling pathway. Phosphorylation is decreased by epinephrine. Phosphorylation may not directly affect the catalytic activity but may regulate the localization. Dephosphorylated by the CTDNEP1-CNEP1R1 complex. Post-translationally, phosphorylated at multiple sites by mTOR in response to insulin, leading to its inactivation. Phosphorylation does not affect the catalytic activity but regulates the localization. Phosphorylation is decreased by epinephrine. Dephosphorylated by the CTDNEP1-CNEP1R1 complex. Dephosphorylation following mTOR inhibition promotes its activity. Sumoylation is important in brain and is marginal in other tissues. Sumoylation facilitates nuclear localization of isoform 2 in neuronals cells and its transcriptional coactivator activity. In terms of processing, acetylation at Lys-459 and Lys-629 by KAT5 in response to fatty acids promotes translocation to the endoplasmic reticulum and synthesis of diacylglycerol. As to expression, specifically expressed in skeletal muscle. Also expressed prominently in adipose tissue, and testis. Lower expression also detected in kidney, lung, brain and liver. Predominant isoform in the liver. In terms of tissue distribution, predominant isoform in the brain.

The protein localises to the mitochondrion outer membrane. Its subcellular location is the cytoplasm. It localises to the nucleus membrane. It is found in the nucleus. The protein resides in the endoplasmic reticulum membrane. The catalysed reaction is a 1,2-diacyl-sn-glycero-3-phosphate + H2O = a 1,2-diacyl-sn-glycerol + phosphate. The enzyme catalyses 1-octadecanoyl-2-(4Z,7Z,10Z,13Z,16Z,19Z-docosahexaenoyl)-sn-glycero-3-phosphate + H2O = 1-octadecanoyl-2-(4Z,7Z,10Z,13Z,16Z,19Z-docosahexaenoyl)-sn-glycerol + phosphate. It carries out the reaction 1-octadecanoyl-2-(5Z,8Z,11Z,14Z-eicosatetraenoyl)-sn-glycero-3-phosphate + H2O = 1-octadecanoyl-2-(5Z,8Z,11Z,14Z-eicosatetraenoyl)-sn-glycerol + phosphate. It catalyses the reaction 1-octadecanoyl-2-(9Z,12Z-octadecadienoyl)-sn-glycero-3-phosphate + H2O = 1-octadecanoyl-2-(9Z,12Z)-octadecadienoyl-sn-glycerol + phosphate. The catalysed reaction is 1-octadecanoyl-2-(9Z-octadecenoyl)-sn-glycero-3-phosphate + H2O = 1-octadecanoyl-2-(9Z-octadecenoyl)-sn-glycerol + phosphate. The enzyme catalyses 1-hexadecanoyl-2-(4Z,7Z,10Z,13Z,16Z,19Z-docosahexaenoyl)-sn-glycero-3-phosphate + H2O = 1-hexadecanoyl-2-(4Z,7Z,10Z,13Z,16Z,19Z-docosahexaenoyl)-sn-glycerol + phosphate. It carries out the reaction 1,2-dioctadecanoyl-sn-glycero-3-phosphate + H2O = 1,2-dioctadecanoyl-sn-glycerol + phosphate. It catalyses the reaction 1-hexadecanoyl-2-(5Z,8Z,11Z,14Z-eicosatetraenoyl)-sn-glycero-3-phosphate + H2O = 1-hexadecanoyl-2-(5Z,8Z,11Z,14Z-eicosatetraenoyl)-sn-glycerol + phosphate. The catalysed reaction is 1-hexadecanoyl-2-(9Z,12Z-octadecadienoyl)-sn-glycero-3-phosphate + H2O = 1-hexadecanoyl-2-(9Z,12Z-octadecadienoyl)-sn-glycerol + phosphate. The enzyme catalyses 1-hexadecanoyl-2-(9Z-octadecenoyl)-sn-glycero-3-phosphate + H2O = 1-hexadecanoyl-2-(9Z-octadecenoyl)-sn-glycerol + phosphate. It carries out the reaction 1,2-di-(4Z,7Z,10Z,13Z,16Z,19Z-docosahexaenoyl)-sn-glycero-3-phosphate + H2O = 1,2-di-(4Z,7Z,10Z,13Z,16Z,19Z-docosahexaenoyl)-sn-glycerol + phosphate. It catalyses the reaction 1,2-di-(5Z,8Z,11Z,14Z)-eicosatetraenoyl-sn-glycero-3-phosphate + H2O = 1,2-di-(5Z,8Z,11Z,14Z)-eicosatetraenoyl-sn-glycerol + phosphate. The catalysed reaction is 1,2-di-(9Z,12Z-octadecadienoyl)-sn-glycero-3-phosphate + H2O = 1,2-di-(9Z,12Z-octadecadienoyl)-sn-glycerol + phosphate. The enzyme catalyses 1,2-di-(9Z-octadecenoyl)-sn-glycero-3-phosphate + H2O = 1,2-di-(9Z-octadecenoyl)-sn-glycerol + phosphate. It carries out the reaction 1,2-dihexadecanoyl-sn-glycero-3-phosphate + H2O = 1,2-dihexadecanoyl-sn-glycerol + phosphate. With respect to regulation, inhibited by N-ethylmaleimide treatment. Its function is as follows. Acts as a magnesium-dependent phosphatidate phosphatase enzyme which catalyzes the conversion of phosphatidic acid to diacylglycerol during triglyceride, phosphatidylcholine and phosphatidylethanolamine biosynthesis and therefore controls the metabolism of fatty acids at different levels. Is involved in adipocyte differentiation. Also acts as nuclear transcriptional coactivator for PPARGC1A/PPARA regulatory pathway to modulate lipid metabolism gene expression. Recruited at the mitochondrion outer membrane and is involved in mitochondrial fission by converting phosphatidic acid to diacylglycerol. The polypeptide is Phosphatidate phosphatase LPIN1 (Lpin1) (Mus musculus (Mouse)).